The following is a 209-amino-acid chain: Uracil phosphoribosyltransferase (209 aa).

5-phospho-alpha-D-ribose 1-diphosphate is bound by residues arginine 79, arginine 104, and 131 to 139 (DPMLATGGS). Uracil-binding positions include isoleucine 194 and 199–201 (GDA). Aspartate 200 is a binding site for 5-phospho-alpha-D-ribose 1-diphosphate.

This sequence belongs to the UPRTase family. The cofactor is Mg(2+).

It catalyses the reaction UMP + diphosphate = 5-phospho-alpha-D-ribose 1-diphosphate + uracil. Its pathway is pyrimidine metabolism; UMP biosynthesis via salvage pathway; UMP from uracil: step 1/1. Allosterically activated by GTP. Its function is as follows. Catalyzes the conversion of uracil and 5-phospho-alpha-D-ribose 1-diphosphate (PRPP) to UMP and diphosphate. The sequence is that of Uracil phosphoribosyltransferase from Listeria monocytogenes serovar 1/2a (strain ATCC BAA-679 / EGD-e).